The primary structure comprises 476 residues: Adenosylhomocysteinase (476 aa).

Residues threonine 67, aspartate 142, and glutamate 202 each coordinate substrate. Position 203–205 (203–205 (TTT)) interacts with NAD(+). Positions 232 and 236 each coordinate substrate. NAD(+)-binding positions include asparagine 237, 266 to 271 (GYGDVG), glutamate 289, asparagine 324, 345 to 347 (IGH), and asparagine 390.

Belongs to the adenosylhomocysteinase family. The cofactor is NAD(+).

Its subcellular location is the cytoplasm. It catalyses the reaction S-adenosyl-L-homocysteine + H2O = L-homocysteine + adenosine. Its pathway is amino-acid biosynthesis; L-homocysteine biosynthesis; L-homocysteine from S-adenosyl-L-homocysteine: step 1/1. Functionally, may play a key role in the regulation of the intracellular concentration of adenosylhomocysteine. This chain is Adenosylhomocysteinase, found in Synechococcus sp. (strain WH7803).